The sequence spans 279 residues: Large ribosomal subunit protein uL2 (279 aa).

Positions 222–264 are disordered; the sequence is GVAMNPVDHPHGGGEGRTSGGRNPVTPAGKPTKGAKTRVNKAT.

Belongs to the universal ribosomal protein uL2 family. In terms of assembly, part of the 50S ribosomal subunit. Forms a bridge to the 30S subunit in the 70S ribosome.

One of the primary rRNA binding proteins. Required for association of the 30S and 50S subunits to form the 70S ribosome, for tRNA binding and peptide bond formation. It has been suggested to have peptidyltransferase activity; this is somewhat controversial. Makes several contacts with the 16S rRNA in the 70S ribosome. This is Large ribosomal subunit protein uL2 from Caulobacter sp. (strain K31).